The chain runs to 559 residues: Potassium-transporting ATPase potassium-binding subunit (559 aa).

Transmembrane regions (helical) follow at residues 5 to 25, 27 to 47, 63 to 83, 132 to 152, 170 to 190, 253 to 273, 283 to 303, 327 to 347, 356 to 376, 379 to 399, 416 to 436, 484 to 504, and 524 to 544; these read GFLL…PLGS, LARL…RILW, LLAL…LLFW, GLTV…FALI, LVRI…LFFI, LAQM…FGEA, LLWA…WAEV, FGVL…CGAV, ALGG…FGGV, GLYG…LMIG, MTAL…ALAM, LLAF…MAIA, and GALF…LTFI.

The protein belongs to the KdpA family. As to quaternary structure, the system is composed of three essential subunits: KdpA, KdpB and KdpC.

It localises to the cell inner membrane. Its function is as follows. Part of the high-affinity ATP-driven potassium transport (or Kdp) system, which catalyzes the hydrolysis of ATP coupled with the electrogenic transport of potassium into the cytoplasm. This subunit binds the periplasmic potassium ions and delivers the ions to the membrane domain of KdpB through an intramembrane tunnel. The chain is Potassium-transporting ATPase potassium-binding subunit from Salmonella newport (strain SL254).